The following is a 630-amino-acid chain: Phosphomethylpyrimidine synthase (630 aa).

Substrate-binding positions include Asn227, Met256, Tyr285, His321, 341–343 (SRG), 382–385 (DGLR), and Glu421. His425 contacts Zn(2+). Position 448 (Tyr448) interacts with substrate. His489 is a binding site for Zn(2+). Residues Cys569, Cys572, and Cys577 each coordinate [4Fe-4S] cluster.

The protein belongs to the ThiC family. In terms of assembly, homodimer. The cofactor is [4Fe-4S] cluster.

The catalysed reaction is 5-amino-1-(5-phospho-beta-D-ribosyl)imidazole + S-adenosyl-L-methionine = 4-amino-2-methyl-5-(phosphooxymethyl)pyrimidine + CO + 5'-deoxyadenosine + formate + L-methionine + 3 H(+). It participates in cofactor biosynthesis; thiamine diphosphate biosynthesis. Catalyzes the synthesis of the hydroxymethylpyrimidine phosphate (HMP-P) moiety of thiamine from aminoimidazole ribotide (AIR) in a radical S-adenosyl-L-methionine (SAM)-dependent reaction. In Hydrogenovibrio crunogenus (strain DSM 25203 / XCL-2) (Thiomicrospira crunogena), this protein is Phosphomethylpyrimidine synthase.